We begin with the raw amino-acid sequence, 431 residues long: 23S rRNA (uracil(1939)-C(5))-methyltransferase RlmD (431 aa).

Positions 10–68 (RVTTRQIITVKVNDLDSFGQGVARHNGKALFIPGLLPEESAEVIITEDKKQFARARVSR) constitute a TRAM domain. Residues C81, C87, C90, and C161 each coordinate [4Fe-4S] cluster. Residues Q264, F293, N298, E314, N341, and D362 each contribute to the S-adenosyl-L-methionine site. C388 (nucleophile) is an active-site residue.

Belongs to the class I-like SAM-binding methyltransferase superfamily. RNA M5U methyltransferase family. RlmD subfamily.

It carries out the reaction uridine(1939) in 23S rRNA + S-adenosyl-L-methionine = 5-methyluridine(1939) in 23S rRNA + S-adenosyl-L-homocysteine + H(+). In terms of biological role, catalyzes the formation of 5-methyl-uridine at position 1939 (m5U1939) in 23S rRNA. This is 23S rRNA (uracil(1939)-C(5))-methyltransferase RlmD from Salmonella choleraesuis (strain SC-B67).